Consider the following 541-residue polypeptide: uncharacterized protein (541 aa).

It localises to the virion. This is an uncharacterized protein from Acanthamoeba polyphaga mimivirus (APMV).